Here is a 772-residue protein sequence, read N- to C-terminus: General transcription and DNA repair factor IIH helicase subunit XPD (772 aa).

The Helicase ATP-binding domain maps to 7–283 (DLPILFPYPR…QSDSKKLQDE (277 aa)). ATP is bound at residue 42-49 (MPSGTGKT). [4Fe-4S] cluster-binding residues include Cys115, Cys133, Cys154, and Cys189. The short motif at 233–236 (DEAH) is the DEAH box element.

The protein belongs to the helicase family. RAD3/XPD subfamily. As to quaternary structure, component of the 7-subunit TFIIH core complex composed of XPB/ptr8, XPD/rad15, ssl1, tfb1, tfb2, tfb4 and tfb5, which is active in NER. The core complex associates with the 3-subunit CTD-kinase module TFIIK composed of mcs2/cyclin H, mcs6/cdk7 and pmh1/tfb3 to form the 10-subunit holoenzyme (holo-TFIIH) active in transcription. [4Fe-4S] cluster is required as a cofactor.

It is found in the nucleus. It carries out the reaction Couples ATP hydrolysis with the unwinding of duplex DNA at the replication fork by translocating in the 5'-3' direction. This creates two antiparallel DNA single strands (ssDNA). The leading ssDNA polymer is the template for DNA polymerase III holoenzyme which synthesizes a continuous strand.. The catalysed reaction is ATP + H2O = ADP + phosphate + H(+). Functionally, ATP-dependent 5'-3' DNA helicase, component of the general transcription and DNA repair factor IIH (TFIIH) core complex, which is involved in general and transcription-coupled nucleotide excision repair (NER) of damaged DNA and, when complexed to TFIIK, in RNA transcription by RNA polymerase II. In NER, TFIIH acts by opening DNA around the lesion to allow the excision of the damaged oligonucleotide and its replacement by a new DNA fragment. The ATP-dependent helicase activity of XPD/rad15 is required for DNA opening. In transcription, TFIIH has an essential role in transcription initiation. When the pre-initiation complex (PIC) has been established, TFIIH is required for promoter opening and promoter escape. Phosphorylation of the C-terminal tail (CTD) of the largest subunit of RNA polymerase II by the kinase module TFIIK controls the initiation of transcription. XPD/rad15 acts by forming a bridge between TFIIK and the core-TFIIH complex. Involved in the maintenance of the fidelity of DNA replication. The chain is General transcription and DNA repair factor IIH helicase subunit XPD from Schizosaccharomyces pombe (strain 972 / ATCC 24843) (Fission yeast).